We begin with the raw amino-acid sequence, 273 residues long: Undecaprenyl-diphosphatase (273 aa).

The next 7 membrane-spanning stretches (helical) occupy residues A48–F68, L89–E109, L116–A136, I152–F172, A193–L213, A222–I242, and I252–Y272.

Belongs to the UppP family.

It localises to the cell membrane. The catalysed reaction is di-trans,octa-cis-undecaprenyl diphosphate + H2O = di-trans,octa-cis-undecaprenyl phosphate + phosphate + H(+). Catalyzes the dephosphorylation of undecaprenyl diphosphate (UPP). Confers resistance to bacitracin. The sequence is that of Undecaprenyl-diphosphatase from Geobacillus thermodenitrificans (strain NG80-2).